A 158-amino-acid polypeptide reads, in one-letter code: Protein Smg homolog (158 aa).

The protein belongs to the Smg family.

The polypeptide is Protein Smg homolog (Shewanella sp. (strain ANA-3)).